The chain runs to 360 residues: Phenylalanine--tRNA ligase alpha subunit (360 aa).

Glu260 lines the Mg(2+) pocket.

The protein belongs to the class-II aminoacyl-tRNA synthetase family. Phe-tRNA synthetase alpha subunit type 1 subfamily. As to quaternary structure, tetramer of two alpha and two beta subunits. Mg(2+) serves as cofactor.

It is found in the cytoplasm. The catalysed reaction is tRNA(Phe) + L-phenylalanine + ATP = L-phenylalanyl-tRNA(Phe) + AMP + diphosphate + H(+). This is Phenylalanine--tRNA ligase alpha subunit from Rhizobium rhizogenes (strain K84 / ATCC BAA-868) (Agrobacterium radiobacter).